Consider the following 124-residue polypeptide: Large ribosomal subunit protein uL18 (124 aa).

It belongs to the universal ribosomal protein uL18 family. As to quaternary structure, part of the 50S ribosomal subunit; part of the 5S rRNA/L5/L18/L25 subcomplex. Contacts the 5S and 23S rRNAs.

This is one of the proteins that bind and probably mediate the attachment of the 5S RNA into the large ribosomal subunit, where it forms part of the central protuberance. The polypeptide is Large ribosomal subunit protein uL18 (Orientia tsutsugamushi (strain Ikeda) (Rickettsia tsutsugamushi)).